The chain runs to 123 residues: Late histone H2B.L3 (123 aa).

Positions 1-10 are enriched in low complexity; the sequence is MPAKAQAAGK. Positions 1-32 are disordered; sequence MPAKAQAAGKKGSKKAKAPKPSGDKKRRRKRK. An O-linked (GlcNAc) serine glycan is attached at S110. Residue K118 forms a Glycyl lysine isopeptide (Lys-Gly) (interchain with G-Cter in ubiquitin) linkage.

This sequence belongs to the histone H2B family. In terms of assembly, the nucleosome is a histone octamer containing two molecules each of H2A, H2B, H3 and H4 assembled in one H3-H4 heterotetramer and two H2A-H2B heterodimers. The octamer wraps approximately 147 bp of DNA. In terms of processing, monoubiquitination of Lys-118 gives a specific tag for epigenetic transcriptional activation and is also prerequisite for histone H3 'Lys-4' and 'Lys-79' methylation. GlcNAcylation at Ser-110 promotes monoubiquitination of Lys-118. It fluctuates in response to extracellular glucose, and associates with transcribed genes.

It is found in the nucleus. Its subcellular location is the chromosome. In terms of biological role, core component of nucleosome. Nucleosomes wrap and compact DNA into chromatin, limiting DNA accessibility to the cellular machineries which require DNA as a template. Histones thereby play a central role in transcription regulation, DNA repair, DNA replication and chromosomal stability. DNA accessibility is regulated via a complex set of post-translational modifications of histones, also called histone code, and nucleosome remodeling. This is Late histone H2B.L3 from Strongylocentrotus purpuratus (Purple sea urchin).